The chain runs to 275 residues: Penicillin-insensitive murein endopeptidase (275 aa).

The first 19 residues, 1–19 (MKNWIVGMVALVTMVPVMA), serve as a signal peptide directing secretion. Cystine bridges form between Cys44–Cys264, Cys187–Cys235, and Cys216–Cys223. Zn(2+)-binding residues include His110, His113, Asp120, Asp147, and His211. Residues 227–262 (DTPPPGDGCGAELESWFQPPPPSAKPGKTLPPPLPP) are disordered. Over residues 244–262 (QPPPPSAKPGKTLPPPLPP) the composition is skewed to pro residues.

The protein belongs to the peptidase M74 family. As to quaternary structure, dimer. It depends on Zn(2+) as a cofactor.

Its subcellular location is the periplasm. In terms of biological role, murein endopeptidase that cleaves the D-alanyl-meso-2,6-diamino-pimelyl amide bond that connects peptidoglycan strands. Likely plays a role in the removal of murein from the sacculus. The polypeptide is Penicillin-insensitive murein endopeptidase (Yersinia pestis bv. Antiqua (strain Antiqua)).